Consider the following 788-residue polypeptide: Bifunctional purine biosynthetic protein ADE1 (788 aa).

Residues 1 to 429 (MSLRILLVGN…NRKDIAYKAF (429 aa)) are GARS. Residues 114–323 (KDFMKKHNIP…LAEVMLACVE (210 aa)) enclose the ATP-grasp domain. 140–201 (VKKVGHRVVI…EEFLEGDELS (62 aa)) lines the ATP pocket. Mg(2+) is bound by residues glutamate 291 and asparagine 293. Residues 439-752 (ITYAQAGVSI…VVKQEKVAEV (314 aa)) are AIRS.

This sequence in the N-terminal section; belongs to the GARS family. In the C-terminal section; belongs to the AIR synthase family. Requires Mg(2+) as cofactor. It depends on Mn(2+) as a cofactor.

The protein resides in the cytoplasm. It is found in the cytosol. It catalyses the reaction 5-phospho-beta-D-ribosylamine + glycine + ATP = N(1)-(5-phospho-beta-D-ribosyl)glycinamide + ADP + phosphate + H(+). It carries out the reaction 2-formamido-N(1)-(5-O-phospho-beta-D-ribosyl)acetamidine + ATP = 5-amino-1-(5-phospho-beta-D-ribosyl)imidazole + ADP + phosphate + H(+). The protein operates within purine metabolism; IMP biosynthesis via de novo pathway; 5-amino-1-(5-phospho-D-ribosyl)imidazole from N(2)-formyl-N(1)-(5-phospho-D-ribosyl)glycinamide: step 2/2. It functions in the pathway purine metabolism; IMP biosynthesis via de novo pathway; N(1)-(5-phospho-D-ribosyl)glycinamide from 5-phospho-alpha-D-ribose 1-diphosphate: step 2/2. In terms of biological role, catalyzes the second and fifth step in the 'de novo' purine biosynthesis pathway; contains phosphoribosylamine--glycine ligase (GARS) and phosphoribosylformylglycinamidine cyclo-ligase (AIRS) activities. The sequence is that of Bifunctional purine biosynthetic protein ADE1 from Yarrowia lipolytica (strain CLIB 122 / E 150) (Yeast).